The sequence spans 188 residues: Protein Cripto (188 aa).

The signal sequence occupies residues 1 to 30 (MDCRKMARFSYSVIWIMAISKVFELGLVAG). The region spanning 78–107 (LNRTCCLNGGTCMLGSFCACPPSFYGRNCE) is the EGF-like domain. The N-linked (GlcNAc...) asparagine glycan is linked to asparagine 79. Intrachain disulfides connect cysteine 82/cysteine 89, cysteine 83/cysteine 95, cysteine 97/cysteine 106, cysteine 115/cysteine 133, cysteine 128/cysteine 149, and cysteine 131/cysteine 140. Aspartate 150 carries the GPI-anchor amidated aspartate lipid modification. Positions 151 to 188 (GLVMDEHLVASRTPELPPSARTTTFMLVGICLSIQSYY) are cleaved as a propeptide — removed in mature form.

This sequence belongs to the EGF-CFC (Cripto-1/FRL1/Cryptic) family. As to quaternary structure, interacts with the activin type-1 receptor ACVR1B. In terms of processing, the GPI-anchor is attached to the protein in the endoplasmic reticulum and serves to target the protein to the cell surface. There, it is processed by GPI processing phospholipase A2 (TMEM8A), removing an acyl-chain at the sn-2 position of GPI and releasing CRIPTO as a lysophosphatidylinositol-bearing form, which is further cleaved by phospholipase D (GPLD1) into a soluble form. In terms of tissue distribution, preferentially expressed in gastric and colorectal carcinomas than in their normal counterparts. Expressed in breast and lung.

The protein localises to the cell membrane. It is found in the secreted. GPI-anchored cell membrane protein involved in Nodal signaling. Cell-associated CRIPTO acts as a Nodal coreceptor in cis. Shedding of CRIPTO by TMEM8A modulates Nodal signaling by allowing soluble CRIPTO to act as a Nodal coreceptor on other cells. Could play a role in the determination of the epiblastic cells that subsequently give rise to the mesoderm. The polypeptide is Protein Cripto (Homo sapiens (Human)).